A 143-amino-acid polypeptide reads, in one-letter code: uncharacterized protein (143 aa).

The HTH marR-type domain maps to 5-137 (DARLASDLSL…LRSAADLMLA (133 aa)). The H-T-H motif DNA-binding region spans 51 to 74 (PGALAIRERVRPPSMTRVIASLAD).

As to quaternary structure, homodimer.

This is an uncharacterized protein from Mycobacterium bovis (strain ATCC BAA-935 / AF2122/97).